The following is a 474-amino-acid chain: ATP synthase subunit beta (474 aa).

153–160 contributes to the ATP binding site; sequence GGAGVGKT.

It belongs to the ATPase alpha/beta chains family. F-type ATPases have 2 components, CF(1) - the catalytic core - and CF(0) - the membrane proton channel. CF(1) has five subunits: alpha(3), beta(3), gamma(1), delta(1), epsilon(1). CF(0) has three main subunits: a(1), b(2) and c(9-12). The alpha and beta chains form an alternating ring which encloses part of the gamma chain. CF(1) is attached to CF(0) by a central stalk formed by the gamma and epsilon chains, while a peripheral stalk is formed by the delta and b chains.

It localises to the cell inner membrane. It catalyses the reaction ATP + H2O + 4 H(+)(in) = ADP + phosphate + 5 H(+)(out). In terms of biological role, produces ATP from ADP in the presence of a proton gradient across the membrane. The catalytic sites are hosted primarily by the beta subunits. The chain is ATP synthase subunit beta from Rickettsia prowazekii (strain Madrid E).